Consider the following 40-residue polypeptide: Photosystem II reaction center protein J (40 aa).

Residues 8 to 28 traverse the membrane as a helical segment; that stretch reads IPLWIIGTVAGILVIGLVGVF.

It belongs to the PsbJ family. In terms of assembly, PSII is composed of 1 copy each of membrane proteins PsbA, PsbB, PsbC, PsbD, PsbE, PsbF, PsbH, PsbI, PsbJ, PsbK, PsbL, PsbM, PsbT, PsbX, PsbY, PsbZ, Psb30/Ycf12, at least 3 peripheral proteins of the oxygen-evolving complex and a large number of cofactors. It forms dimeric complexes.

It is found in the plastid. It localises to the chloroplast thylakoid membrane. Its function is as follows. One of the components of the core complex of photosystem II (PSII). PSII is a light-driven water:plastoquinone oxidoreductase that uses light energy to abstract electrons from H(2)O, generating O(2) and a proton gradient subsequently used for ATP formation. It consists of a core antenna complex that captures photons, and an electron transfer chain that converts photonic excitation into a charge separation. The chain is Photosystem II reaction center protein J from Helianthus annuus (Common sunflower).